Reading from the N-terminus, the 135-residue chain is Protein KRTCAP2 homolog (135 aa).

A run of 4 helical transmembrane segments spans residues 1 to 21 (MAVS…LLFA), 35 to 55 (PMAI…LTAI), 69 to 89 (TKLI…SGMV), and 93 to 113 (CITT…RISI).

This sequence belongs to the KRTCAP2 family. Component of the oligosaccharyltransferase (OST) complex.

Its subcellular location is the membrane. Its function is as follows. Subunit of the oligosaccharyl transferase (OST) complex that catalyzes the initial transfer of a defined glycan (Glc(3)Man(9)GlcNAc(2) in eukaryotes) from the lipid carrier dolichol-pyrophosphate to an asparagine residue within an Asn-X-Ser/Thr consensus motif in nascent polypeptide chains, the first step in protein N-glycosylation. N-glycosylation occurs cotranslationally and the complex associates with the Sec61 complex at the channel-forming translocon complex that mediates protein translocation across the endoplasmic reticulum (ER). All subunits are required for a maximal enzyme activity. The polypeptide is Protein KRTCAP2 homolog (Ixodes scapularis (Black-legged tick)).